Here is a 256-residue protein sequence, read N- to C-terminus: Thiazole synthase (256 aa).

The active-site Schiff-base intermediate with DXP is the Lys96. 1-deoxy-D-xylulose 5-phosphate-binding positions include Gly157, 184–185 (AG), and 206–207 (NT).

Belongs to the ThiG family. Homotetramer. Forms heterodimers with either ThiH or ThiS.

The protein localises to the cytoplasm. It catalyses the reaction [ThiS sulfur-carrier protein]-C-terminal-Gly-aminoethanethioate + 2-iminoacetate + 1-deoxy-D-xylulose 5-phosphate = [ThiS sulfur-carrier protein]-C-terminal Gly-Gly + 2-[(2R,5Z)-2-carboxy-4-methylthiazol-5(2H)-ylidene]ethyl phosphate + 2 H2O + H(+). Its pathway is cofactor biosynthesis; thiamine diphosphate biosynthesis. Catalyzes the rearrangement of 1-deoxy-D-xylulose 5-phosphate (DXP) to produce the thiazole phosphate moiety of thiamine. Sulfur is provided by the thiocarboxylate moiety of the carrier protein ThiS. In vitro, sulfur can be provided by H(2)S. The polypeptide is Thiazole synthase (Roseobacter denitrificans (strain ATCC 33942 / OCh 114) (Erythrobacter sp. (strain OCh 114))).